The sequence spans 555 residues: Potassium-transporting ATPase potassium-binding subunit (555 aa).

Transmembrane regions (helical) follow at residues 2 to 22, 60 to 80, 130 to 150, 173 to 193, 246 to 266, 278 to 298, 374 to 394, 412 to 432, 483 to 503, and 525 to 545; these read IWVAVVITMLLFILVAKPTGI, QYALSLVLLNGFMIVVVYFIF, IGITFLMFAAPATTLALVMAF, VFLPIAFMAALVFVALGVPQT, MSNILQMMLMMLLPTALPFTY, ILFVSLFMVFLLGFITITTSE, AGFVNIIMYAIIAVFISGLMV, LIAVTILFHPLLILGFSALAL, LVMFLGRYFSLITMLAVAASL, and GIFIGTIVIVGALTFFPMLVL.

It belongs to the KdpA family. The system is composed of three essential subunits: KdpA, KdpB and KdpC.

The protein localises to the cell membrane. In terms of biological role, part of the high-affinity ATP-driven potassium transport (or Kdp) system, which catalyzes the hydrolysis of ATP coupled with the electrogenic transport of potassium into the cytoplasm. This subunit binds the extracellular potassium ions and delivers the ions to the membrane domain of KdpB through an intramembrane tunnel. The chain is Potassium-transporting ATPase potassium-binding subunit from Bacillus thuringiensis (strain Al Hakam).